Here is a 490-residue protein sequence, read N- to C-terminus: ATP synthase subunit beta, plastid (490 aa).

170-177 (GGAGVGKT) is a binding site for ATP.

The protein belongs to the ATPase alpha/beta chains family. As to quaternary structure, F-type ATPases have 2 components, CF(1) - the catalytic core - and CF(0) - the membrane proton channel. CF(1) has five subunits: alpha(3), beta(3), gamma(1), delta(1), epsilon(1). CF(0) has four main subunits: a(1), b(1), b'(1) and c(9-12).

Its subcellular location is the plastid membrane. The catalysed reaction is ATP + H2O + 4 H(+)(in) = ADP + phosphate + 5 H(+)(out). In terms of biological role, produces ATP from ADP in the presence of a proton gradient across the membrane. The catalytic sites are hosted primarily by the beta subunits. This chain is ATP synthase subunit beta, plastid, found in Cuscuta exaltata (Tall dodder).